Here is a 309-residue protein sequence, read N- to C-terminus: Homoserine O-succinyltransferase (309 aa).

C142 serves as the catalytic Acyl-thioester intermediate. Positions 163 and 192 each coordinate substrate. The active-site Proton acceptor is the H235. Residue E237 is part of the active site. Residue R249 coordinates substrate.

This sequence belongs to the MetA family.

Its subcellular location is the cytoplasm. It catalyses the reaction L-homoserine + succinyl-CoA = O-succinyl-L-homoserine + CoA. It functions in the pathway amino-acid biosynthesis; L-methionine biosynthesis via de novo pathway; O-succinyl-L-homoserine from L-homoserine: step 1/1. In terms of biological role, transfers a succinyl group from succinyl-CoA to L-homoserine, forming succinyl-L-homoserine. This chain is Homoserine O-succinyltransferase, found in Klebsiella pneumoniae subsp. pneumoniae (strain ATCC 700721 / MGH 78578).